We begin with the raw amino-acid sequence, 343 residues long: L-threonine 3-dehydrogenase (343 aa).

Position 38 (cysteine 38) interacts with Zn(2+). Catalysis depends on charge relay system residues threonine 40 and histidine 43. Zn(2+) is bound by residues histidine 63, glutamate 64, cysteine 93, cysteine 96, cysteine 99, and cysteine 107. NAD(+)-binding positions include isoleucine 175, aspartate 195, arginine 200, 262 to 264 (LGI), and 286 to 287 (IY).

The protein belongs to the zinc-containing alcohol dehydrogenase family. Homotetramer. Requires Zn(2+) as cofactor.

It is found in the cytoplasm. The enzyme catalyses L-threonine + NAD(+) = (2S)-2-amino-3-oxobutanoate + NADH + H(+). The protein operates within amino-acid degradation; L-threonine degradation via oxydo-reductase pathway; glycine from L-threonine: step 1/2. Its function is as follows. Catalyzes the NAD(+)-dependent oxidation of L-threonine to 2-amino-3-ketobutyrate. This chain is L-threonine 3-dehydrogenase, found in Burkholderia mallei (strain NCTC 10247).